The primary structure comprises 281 residues: Pantothenate synthetase (281 aa).

30–37 (MGALHRGH) contributes to the ATP binding site. The active-site Proton donor is H37. Q61 contacts (R)-pantoate. Q61 lines the beta-alanine pocket. Residue 147-150 (GEKD) participates in ATP binding. Q153 lines the (R)-pantoate pocket. ATP is bound by residues I176 and 184–187 (LSSR).

The protein belongs to the pantothenate synthetase family. Homodimer.

The protein localises to the cytoplasm. It catalyses the reaction (R)-pantoate + beta-alanine + ATP = (R)-pantothenate + AMP + diphosphate + H(+). The protein operates within cofactor biosynthesis; (R)-pantothenate biosynthesis; (R)-pantothenate from (R)-pantoate and beta-alanine: step 1/1. Catalyzes the condensation of pantoate with beta-alanine in an ATP-dependent reaction via a pantoyl-adenylate intermediate. The protein is Pantothenate synthetase of Porphyromonas gingivalis (strain ATCC BAA-308 / W83).